Here is a 383-residue protein sequence, read N- to C-terminus: Sulfate adenylyltransferase (383 aa).

The protein belongs to the sulfate adenylyltransferase family.

It catalyses the reaction sulfate + ATP + H(+) = adenosine 5'-phosphosulfate + diphosphate. It participates in sulfur metabolism; hydrogen sulfide biosynthesis; sulfite from sulfate: step 1/3. This chain is Sulfate adenylyltransferase, found in Halothermothrix orenii (strain H 168 / OCM 544 / DSM 9562).